The following is a 93-amino-acid chain: UPF0369 protein RC0209 (93 aa).

The segment at 1–24 (MDDKKDNRHLSKPAYREECTGDTE) is disordered. The region spanning 8–55 (RHLSKPAYREECTGDTERSTTAYMDILEDVSTGSTSKLPLEAKFVKIS) is the RPE1 insert domain.

This sequence belongs to the SDHAF4 family.

The chain is UPF0369 protein RC0209 from Rickettsia conorii (strain ATCC VR-613 / Malish 7).